Reading from the N-terminus, the 126-residue chain is Probable prefoldin subunit 4 (126 aa).

This sequence belongs to the prefoldin subunit beta family. As to quaternary structure, heterohexamer of two PFD-alpha type and four PFD-beta type subunits.

Functionally, binds specifically to cytosolic chaperonin (c-CPN) and transfers target proteins to it. Binds to nascent polypeptide chain and promotes folding in an environment in which there are many competing pathways for nonnative proteins. Appears to play a non-essential role. The protein is Probable prefoldin subunit 4 of Caenorhabditis briggsae.